We begin with the raw amino-acid sequence, 280 residues long: F420-dependent methylenetetrahydromethanopterin dehydrogenase (280 aa).

It belongs to the MTD family.

It catalyses the reaction 5,10-methylenetetrahydromethanopterin + oxidized coenzyme F420-(gamma-L-Glu)(n) + 2 H(+) = 5,10-methenyl-5,6,7,8-tetrahydromethanopterin + reduced coenzyme F420-(gamma-L-Glu)(n). The protein operates within one-carbon metabolism; methanogenesis from CO(2); 5,10-methylene-5,6,7,8-tetrahydromethanopterin from 5,10-methenyl-5,6,7,8-tetrahydromethanopterin (coenzyme F420 route): step 1/1. Functionally, catalyzes the reversible reduction of methenyl-H(4)MPT(+) to methylene-H(4)MPT. The chain is F420-dependent methylenetetrahydromethanopterin dehydrogenase from Methanospirillum hungatei JF-1 (strain ATCC 27890 / DSM 864 / NBRC 100397 / JF-1).